A 331-amino-acid chain; its full sequence is Dioxygenase swnH2 (331 aa).

A compositionally biased stretch (polar residues) spans 1–11 (MINSDAQSAQK). A disordered region spans residues 1–31 (MINSDAQSAQKQVEVEKPDEKYSAPRLLPPI). Residues 13–23 (VEVEKPDEKYS) are compositionally biased toward basic and acidic residues. Histidine 173, aspartate 175, and histidine 250 together coordinate Fe cation.

The protein belongs to the PhyH family. As to quaternary structure, homodimer. Fe cation serves as cofactor.

The protein operates within mycotoxin biosynthesis. Functionally, dioxygenase; part of the gene cluster that mediates the biosynthesis of swainsonine (SW), a cytotoxic fungal alkaloid and a potential cancer therapy drug. Swainsonine production occurs via a multibranched pathway and is dispensable for fungal colonization of plants and infection of insect hosts. The first step of swainsonine biosynthesis is the production of the precursor pipecolic acid (PA) via conversion of L-lysine (Lys) to 1-piperideine-6-carboxylate (P6C) by the aminotransferase swnA, the latter being further reduced to PA by the reductase swnR. PA can be converted from lysine by both the SW biosynthetic cluster and the unclustered genes such as lysine cyclodeaminase. The PKS-NRPS hybrid synthetase swnK uptakes and condensates PA and malonyl-CoA with and without skipping of the ketoreductase (KR) domain in order to produce 3 intermediates, 1-oxoindolizidine, (1S)-1-hydroxyindolizin, and (1R)-1-hydroxyindolizine; with the transisomer (1S)-1-hydroxyindolizin being predominant. The terminal thioester reductase (TE) domain of swnK is involved in reduction of the thioester bond to release the intermediate aldehydes. The oxidoreductase swnN could contribute to the reduction of 1-oxoindolizidine to (1S)-1-hydroxyindolizin and (1R)-1-hydroxyindolizine, contributing to the major route of SW production. The dioxygenase swnH2 would be responsible for the oxidization of (1R)-1-hydroxyindolizine into (1R,2S)-1,2-dihydroxyindolizine and of (1S)-1-hydroxyindolizin to yield both (1R,2S)-1,2-dihydroxyindolizine and (1S,2S)-1,2-dihydroxyindolizine. The dioxygenase swnH1 then performs the conversion of the 1,2-dihydroxyindolizine epimers to SW. In Metarhizium robertsii (strain ARSEF 23 / ATCC MYA-3075) (Metarhizium anisopliae (strain ARSEF 23)), this protein is Dioxygenase swnH2.